Reading from the N-terminus, the 122-residue chain is Large ribosomal subunit protein uL14 (122 aa).

Belongs to the universal ribosomal protein uL14 family. Part of the 50S ribosomal subunit. Forms a cluster with proteins L3 and L19. In the 70S ribosome, L14 and L19 interact and together make contacts with the 16S rRNA in bridges B5 and B8.

Functionally, binds to 23S rRNA. Forms part of two intersubunit bridges in the 70S ribosome. The protein is Large ribosomal subunit protein uL14 of Brucella anthropi (strain ATCC 49188 / DSM 6882 / CCUG 24695 / JCM 21032 / LMG 3331 / NBRC 15819 / NCTC 12168 / Alc 37) (Ochrobactrum anthropi).